Consider the following 204-residue polypeptide: MVCGGFSCSKNCLCALNLLYTLVSLLLIGIAAWGIGFGLISSLRVVGVVIAVGIFLFLIALVGLIGAVKHHQVLLFFYMIILLLVFIVQFSVSCACLALNREQQGQLLEVGWNNTASARNDIQRNLNCCGFRSYNPNDTCPASCAKSTQKCSSCAPIIGEYAGEVLRFVGGIGLFFSFTEILGVWLTYRYRNQKDPRANPSAFL.

Over 1-19 (MVCGGFSCSKNCLCALNLL) the chain is Cytoplasmic. A helical transmembrane segment spans residues 20-40 (YTLVSLLLIGIAAWGIGFGLI). The Extracellular portion of the chain corresponds to 41 to 44 (SSLR). Residues 45–65 (VVGVVIAVGIFLFLIALVGLI) traverse the membrane as a helical segment. Topologically, residues 66–72 (GAVKHHQ) are cytoplasmic. A helical transmembrane segment spans residues 73–93 (VLLFFYMIILLLVFIVQFSVS). The Extracellular portion of the chain corresponds to 94–167 (CACLALNREQ…IGEYAGEVLR (74 aa)). 2 N-linked (GlcNAc...) asparagine glycosylation sites follow: Asn-113 and Asn-137. Phosphoserine is present on Ser-143. The helical transmembrane segment at 168-188 (FVGGIGLFFSFTEILGVWLTY) threads the bilayer. Residues 189 to 204 (RYRNQKDPRANPSAFL) are Cytoplasmic-facing.

This sequence belongs to the tetraspanin (TM4SF) family.

It is found in the membrane. The polypeptide is Tetraspanin-13 (Tspan13) (Mus musculus (Mouse)).